Here is a 446-residue protein sequence, read N- to C-terminus: Packaging protein 1 (446 aa).

The span at 1 to 10 (METRGRRRAF) shows a compositional bias: basic residues. Positions 1–74 (METRGRRRAF…PSQPPQPRSL (74 aa)) are disordered. 170–177 (GPTGCGKS) serves as a coordination point for ATP. Residues 439-446 (RAYRKRNK) form a DNA-binding region.

This sequence belongs to the adenoviridae packaging protein 1 family. Homodimer. Part of a genome packaging complex composed of packaging proteins 1, 2 and 3; this complex specifically binds to the packaging sequence on the left end of viral genomic DNA and performs packaging of the viral genome. Interacts with protein 33K.

The protein resides in the virion. Its subcellular location is the host nucleus. The protein localises to the host nucleoplasm. It localises to the host nucleolus. In terms of biological role, component of the packaging machinery which encapsidates the viral DNA into preformed capsids and transcriptional activator of the viral major late promoter (MLP). Binds, along with packaging proteins 2 and 3, to the specific packaging sequence on the left end of viral genomic DNA and displays ATPase activity thereby providing the power stroke of the packaging machinery. The activity of packaging protein IVa2 is stimulated by protein 33K which acts as a terminase. May be the protein that pumps DNA into the capsid powered by ATP hydrolysis. Specifically binds to the 5'-CG-3' nucleotides of the repeats making up the packaging sequence. Component of the DEF-A and DEF-B transcription factors that bind downstream elements of the major late promoter (MLP), and stimulate transcription from the MLP after initiation of viral DNA replication. DEF-A is a heterodimer packaging proteins 1 and 2 and DEF-B is a homodimer of packaging protein 1. In Human adenovirus F serotype 40 (HAdV-40), this protein is Packaging protein 1.